The primary structure comprises 243 residues: Terpene cyclase ptmB (243 aa).

Helical transmembrane passes span 19-39 (IANLFVLGMGLGWLINYVGMI), 48-68 (YGMAIMPLCCNIAWEIVYSLI), and 78-98 (GVFIAGLTINIGVMYAAIKFA). N-linked (GlcNAc...) asparagine glycosylation occurs at asparagine 111. The next 4 membrane-spanning stretches (helical) occupy residues 112-132 (LSLIFFLATLGFLTGHLALAA), 137-157 (SLAYSWGAVVCQLLLSVGGLC), 172-194 (LWLSRFLGSSCTVGFASLRWMYW), and 205-225 (LVLWSLALFLTVDGSYGICYW).

This sequence belongs to the paxB family.

The protein localises to the membrane. The protein operates within secondary metabolite biosynthesis. Functionally, terpene cyclase; part of the gene cluster that mediates the biosynthesis of the indole diterpenes penitrems. The geranylgeranyl diphosphate (GGPP) synthase ptmG catalyzes the first step in penitrem biosynthesis via conversion of farnesyl pyrophosphate and isopentyl pyrophosphate into geranylgeranyl pyrophosphate (GGPP). Condensation of indole-3-glycerol phosphate with GGPP by the prenyl transferase ptmC then forms 3-geranylgeranylindole (3-GGI). Epoxidation by the FAD-dependent monooxygenase ptmM leads to a epoxidized-GGI that is substrate of the terpene cyclase ptmB for cyclization to yield paspaline. Paspaline is subsequently converted to 13-desoxypaxilline by the cytochrome P450 monooxygenase ptmP, the latter being then converted to paxilline by the cytochrome P450 monooxygenase ptmQ. Paxilline is converted to beta-paxitriol via C-10 ketoreduction by the short-chain dehydrogenase ptmH which can be monoprenylated at the C-20 by the indole diterpene prenyltransferase ptmD. A two-step elimination (acetylation and elimination) process performed by the O-acetyltransferase ptmV and ptmI leads to the production of the prenylated form of penijanthine. The FAD-linked oxidoreductase ptmO then converts the prenylated form of penijanthine into PC-M5 which is in turn transformed into PC-M4 by the aromatic dimethylallyltransferase ptmE. Five sequential oxidative transformations performed by the cytochrome P450 monooxygenases ptmK, ptmU, ptmL, ptmN and ptmJ yield the various penitrem compounds. PtmK, ptmU and ptmM are involved in the formation of the key bicyclic ring of penitrem C via the formation of the intermediates secopenitrem D and penitrem D. PtmL catalyzes the epoxidation of penitrem D and C to yield penitrem B and F, respectively. PtmJ catalyzes the last benzylic hydroxylation to convert penitrem B to prenitrem E and penitrem F to penitrem A. This chain is Terpene cyclase ptmB, found in Penicillium ochrochloron.